A 47-amino-acid polypeptide reads, in one-letter code: Large ribosomal subunit protein bL34 (47 aa).

This sequence belongs to the bacterial ribosomal protein bL34 family.

This is Large ribosomal subunit protein bL34 (rpmH) from Mycolicibacterium smegmatis (strain ATCC 700084 / mc(2)155) (Mycobacterium smegmatis).